The following is an 891-amino-acid chain: DNA polymerase I (891 aa).

Residues 1 to 313 form the 5'-3' exonuclease domain; sequence MEQPVIKEGT…LLDNTPALDN (313 aa). Positions 314-488 constitute a 3'-5' exonuclease domain; the sequence is TPKKSCMIVL…RLCEYFEKGG (175 aa). The polymerase stretch occupies residues 492-890; sequence NLLSLAREIE…FIAKRWNELK (399 aa).

This sequence belongs to the DNA polymerase type-A family. In terms of assembly, single-chain monomer with multiple functions.

The catalysed reaction is DNA(n) + a 2'-deoxyribonucleoside 5'-triphosphate = DNA(n+1) + diphosphate. Its function is as follows. In addition to polymerase activity, this DNA polymerase exhibits 3'-5' and 5'-3' exonuclease activity. The sequence is that of DNA polymerase I (polA) from Helicobacter pylori (strain ATCC 700392 / 26695) (Campylobacter pylori).